Here is a 506-residue protein sequence, read N- to C-terminus: Glutamate--tRNA ligase (506 aa).

Residues 12–22 carry the 'HIGH' region motif; the sequence is PSPTGDPHVGT. The short motif at 253–257 is the 'KMSKS' region element; that stretch reads KLSKR. Lys256 lines the ATP pocket.

This sequence belongs to the class-I aminoacyl-tRNA synthetase family. Glutamate--tRNA ligase type 1 subfamily. In terms of assembly, monomer.

It is found in the cytoplasm. The enzyme catalyses tRNA(Glu) + L-glutamate + ATP = L-glutamyl-tRNA(Glu) + AMP + diphosphate. In terms of biological role, catalyzes the attachment of glutamate to tRNA(Glu) in a two-step reaction: glutamate is first activated by ATP to form Glu-AMP and then transferred to the acceptor end of tRNA(Glu). The polypeptide is Glutamate--tRNA ligase (Chlamydia trachomatis serovar L2 (strain ATCC VR-902B / DSM 19102 / 434/Bu)).